The following is a 472-amino-acid chain: Bifunctional protein HldE (472 aa).

A ribokinase region spans residues 1–315; it reads MAKRVKILVV…QLLNSSFGAN (315 aa). An ATP-binding site is contributed by 192-195; the sequence is NKKE. D260 is an active-site residue. Residues 340–472 form a cytidylyltransferase region; the sequence is FTNGCFDILH…IKDAKNDDKK (133 aa).

This sequence in the N-terminal section; belongs to the carbohydrate kinase PfkB family. In the C-terminal section; belongs to the cytidylyltransferase family. In terms of assembly, homodimer.

The enzyme catalyses D-glycero-beta-D-manno-heptose 7-phosphate + ATP = D-glycero-beta-D-manno-heptose 1,7-bisphosphate + ADP + H(+). It catalyses the reaction D-glycero-beta-D-manno-heptose 1-phosphate + ATP + H(+) = ADP-D-glycero-beta-D-manno-heptose + diphosphate. It participates in nucleotide-sugar biosynthesis; ADP-L-glycero-beta-D-manno-heptose biosynthesis; ADP-L-glycero-beta-D-manno-heptose from D-glycero-beta-D-manno-heptose 7-phosphate: step 1/4. The protein operates within nucleotide-sugar biosynthesis; ADP-L-glycero-beta-D-manno-heptose biosynthesis; ADP-L-glycero-beta-D-manno-heptose from D-glycero-beta-D-manno-heptose 7-phosphate: step 3/4. Its function is as follows. Catalyzes the phosphorylation of D-glycero-D-manno-heptose 7-phosphate at the C-1 position to selectively form D-glycero-beta-D-manno-heptose-1,7-bisphosphate. Functionally, catalyzes the ADP transfer from ATP to D-glycero-beta-D-manno-heptose 1-phosphate, yielding ADP-D-glycero-beta-D-manno-heptose. This is Bifunctional protein HldE from Campylobacter concisus (strain 13826).